The primary structure comprises 320 residues: Biotin synthase (320 aa).

The Radical SAM core domain maps to 46-275; the sequence is NMGRRVDLCS…YAHIRYAGGR (230 aa). Residues Cys-64, Cys-68, and Cys-71 each coordinate [4Fe-4S] cluster. Ser-108, Cys-140, Cys-200, and Arg-270 together coordinate [2Fe-2S] cluster.

Belongs to the radical SAM superfamily. Biotin synthase family. In terms of assembly, homodimer. It depends on [4Fe-4S] cluster as a cofactor. [2Fe-2S] cluster is required as a cofactor.

The catalysed reaction is (4R,5S)-dethiobiotin + (sulfur carrier)-SH + 2 reduced [2Fe-2S]-[ferredoxin] + 2 S-adenosyl-L-methionine = (sulfur carrier)-H + biotin + 2 5'-deoxyadenosine + 2 L-methionine + 2 oxidized [2Fe-2S]-[ferredoxin]. The protein operates within cofactor biosynthesis; biotin biosynthesis; biotin from 7,8-diaminononanoate: step 2/2. Functionally, catalyzes the conversion of dethiobiotin (DTB) to biotin by the insertion of a sulfur atom into dethiobiotin via a radical-based mechanism. This Acetivibrio thermocellus (strain ATCC 27405 / DSM 1237 / JCM 9322 / NBRC 103400 / NCIMB 10682 / NRRL B-4536 / VPI 7372) (Clostridium thermocellum) protein is Biotin synthase.